The primary structure comprises 176 residues: Ribosome rescue factor SmrB (176 aa).

The 76-residue stretch at 93 to 168 (LDLHGYRQSE…GDAALLVLID (76 aa)) folds into the Smr domain.

This sequence belongs to the SmrB family. Associates with collided ribosomes, but not with correctly translating polysomes.

Functionally, acts as a ribosome collision sensor. Detects stalled/collided disomes (pairs of ribosomes where the leading ribosome is stalled and a second ribosome has collided with it) and endonucleolytically cleaves mRNA at the 5' boundary of the stalled ribosome. Stalled/collided disomes form a new interface (primarily via the 30S subunits) that binds SmrB. Cleaved mRNA becomes available for tmRNA ligation, leading to ribosomal subunit dissociation and rescue of stalled ribosomes. In Shewanella baltica (strain OS195), this protein is Ribosome rescue factor SmrB.